The following is a 91-amino-acid chain: UPF0512 protein E (91 aa).

Residues M1–N25 are compositionally biased toward low complexity. The segment at M1–R26 is disordered.

The protein belongs to the UPF0512 family.

This is UPF0512 protein E from Dictyostelium discoideum (Social amoeba).